Here is a 246-residue protein sequence, read N- to C-terminus: 14-3-3 protein beta/alpha (246 aa).

Met-1 bears the N-acetylmethionine mark. N-acetylthreonine; in 14-3-3 protein beta/alpha, N-terminally processed is present on Thr-2. Thr-2 carries the phosphothreonine modification. At Lys-5 the chain carries N6-acetyllysine. Lys-51 is subject to N6-acetyllysine; alternate. Lys-51 is covalently cross-linked (Glycyl lysine isopeptide (Lys-Gly) (interchain with G-Cter in SUMO2); alternate). Ser-60 carries the phosphoserine modification. Lys-70 is modified (N6-acetyllysine). 3'-nitrotyrosine occurs at positions 84 and 106. Lys-117 is modified (N6-acetyllysine). Residues Ser-186 and Ser-232 each carry the phosphoserine modification.

The protein belongs to the 14-3-3 family. In terms of assembly, homodimer. Interacts with SAMSN1 and PRKCE. Interacts with AKAP13. Interacts with SSH1 and TORC2/CRTC2. Interacts with ABL1; the interaction results in cytoplasmic location of ABL1 and inhibition of cABL-mediated apoptosis. Interacts with ROR2 (dimer); the interaction results in phosphorylation of YWHAB on tyrosine residues. Interacts with GAB2. Interacts with YAP1 (phosphorylated form). Interacts with the phosphorylated (by AKT1) form of SRPK2. Interacts with PKA-phosphorylated AANAT. Interacts with MYO1C. Interacts with SIRT2. Interacts with the 'Thr-369' phosphorylated form of DAPK2. Interacts with PI4KB, TBC1D22A and TBC1D22B. Interacts with the 'Ser-1134' and 'Ser-1161' phosphorylated form of SOS1. Interacts (via phosphorylated form) with YWHAB; this interaction occurs in a protein kinase AKT1-dependent manner. Interacts with SLITRK1. Interacts with SYNPO2 (phosphorylated form); YWHAB competes with ACTN2 for interaction with SYNPO2. Interacts with RIPOR2 (via phosphorylated form); this interaction occurs in a chemokine-dependent manner and does not compete for binding of RIPOR2 with RHOA nor blocks inhibition of RIPOR2-mediated RHOA activity. Interacts with MARK2 and MARK3. Interacts with TESK1; the interaction is dependent on the phosphorylation of TESK1 'Ser-439' and inhibits TESK1 kinase activity. Interacts with MEFV. Interacts with HDAC4. Interacts with ADAM22 (via C-terminus). Post-translationally, the alpha, brain-specific form differs from the beta form in being phosphorylated. Phosphorylated on Ser-60 by protein kinase C delta type catalytic subunit in a sphingosine-dependent fashion. In terms of processing, isoform Short contains a N-acetylmethionine at position 1.

It localises to the cytoplasm. The protein localises to the melanosome. Adapter protein implicated in the regulation of a large spectrum of both general and specialized signaling pathways. Binds to a large number of partners, usually by recognition of a phosphoserine or phosphothreonine motif. Binding generally results in the modulation of the activity of the binding partner. Negative regulator of osteogenesis. Blocks the nuclear translocation of the phosphorylated form (by AKT1) of SRPK2 and antagonizes its stimulatory effect on cyclin D1 expression resulting in blockage of neuronal apoptosis elicited by SRPK2. Negative regulator of signaling cascades that mediate activation of MAP kinases via AKAP13. This is 14-3-3 protein beta/alpha (Ywhab) from Rattus norvegicus (Rat).